Reading from the N-terminus, the 555-residue chain is MAKKVAVIGAGVSGLTSIKCCLDEDLEPTCFERSNDIGGLWKYTETSKDGMTRIYWSLVTNVCKEMSCYSDFPFQEDYPNFMSHSKFWNYLQEFAEHFDLLKYIQFKTTVCSVTKRPDFSKTGQWDVVTETEGKQHRAVFDAVMVCTGKFLNPRLPLESFPGILKFRGQILHCQEYKIPEGFRGQRVLVIGLGNSGGDVAVELSRVAAQVLLSTRTGTWVISRSSNGGYPFNMMITRRCLNVIEQVLPSCFLRWINERQMNKRFNHENYGLSITKGKNPKFIVNDELPTCILCGTVTVKTSVKEFTETSAIFEDGTVEENIDSVIFTTGYVFSFPFLEEPLRSLCMKKMFLYKHVFPSNLERASMAIIGLISLKGSILTGTELQARWATRVFKGLCKIPPPQQLMAEVTKKEELIKRGVIKDTSEEKLSYIPYMDDLAACIGTKPNIPLLFLKDPRLAWEVFFGPCTPYQYRLMGPGKWDGARNAILTQWDRTLKPLKTRTVSSDSSKSASLSHYLKVWGAPLLLASVLLICKSSHFLKSVRDKLQNRIFPYLVL.

Residues 9–13, Glu-32, and 40–41 each bind FAD; these read GAGVS and LW. NADP(+)-binding positions include 60-61 and 195-198; these read TN and SGGD. A helical transmembrane segment spans residues 515-532; it reads YLKVWGAPLLLASVLLIC.

This sequence belongs to the FMO family. The cofactor is FAD. As to expression, kidney and liver.

It localises to the microsome membrane. The protein resides in the endoplasmic reticulum membrane. The enzyme catalyses N,N-dimethylaniline + NADPH + O2 + H(+) = N,N-dimethylaniline N-oxide + NADP(+) + H2O. Functionally, this protein is involved in the oxidative metabolism of a variety of xenobiotics such as drugs and pesticides. In Oryctolagus cuniculus (Rabbit), this protein is Dimethylaniline monooxygenase [N-oxide-forming] 4 (FMO4).